The following is a 325-amino-acid chain: Glutarate 2-hydroxylase (325 aa).

Fe cation-binding residues include histidine 160, aspartate 162, and histidine 292.

The protein belongs to the glutarate hydroxylase family. Homotetramer. Fe(2+) is required as a cofactor.

The catalysed reaction is glutarate + 2-oxoglutarate + O2 = (S)-2-hydroxyglutarate + succinate + CO2. The protein operates within amino-acid degradation. In terms of biological role, acts as an alpha-ketoglutarate-dependent dioxygenase catalyzing hydroxylation of glutarate (GA) to L-2-hydroxyglutarate (L2HG). Functions in a L-lysine degradation pathway that proceeds via cadaverine, glutarate and L-2-hydroxyglutarate. This chain is Glutarate 2-hydroxylase, found in Escherichia coli (strain UTI89 / UPEC).